A 120-amino-acid polypeptide reads, in one-letter code: MKTLFVLISILYAVYCFSSEEDVDSAYLANELEPVEDINSEQYAALEPKEEQERSCADMGQDCKDDCDCCLNIATCNCWFGRYFCSCTFGDYQTCLRKKGKCKRNRPQSCPRSNLNRKKG.

Positions 1 to 16 (MKTLFVLISILYAVYC) are cleaved as a signal peptide. Residues 17-54 (FSSEEDVDSAYLANELEPVEDINSEQYAALEPKEEQER) constitute a propeptide that is removed on maturation. 4 cysteine pairs are disulfide-bonded: cysteine 56–cysteine 70, cysteine 63–cysteine 76, cysteine 69–cysteine 87, and cysteine 78–cysteine 85. Residues 56 to 95 (CADMGQDCKDDCDCCLNIATCNCWFGRYFCSCTFGDYQTC) form the Agouti domain.

The protein belongs to the neurotoxin 05 (agouti) family. Contains 6 disulfide bonds. In terms of tissue distribution, expressed by the venom gland.

The protein localises to the secreted. In Lycosa singoriensis (Wolf spider), this protein is U13-lycotoxin-Ls1a.